A 551-amino-acid polypeptide reads, in one-letter code: Synapse-associated protein of 47 kDa (551 aa).

Disordered regions lie at residues 20–72 (AGDE…AGKR) and 117–198 (AMPA…GQGK). Low complexity-rich tracts occupy residues 26 to 59 (PAPT…AAAA), 117 to 128 (AMPAMPSIPSIP), and 137 to 146 (DGAEGAEGAV). 2 positions are modified to phosphoserine: Ser-178 and Ser-182. Positions 182–197 (SGGGTPTGDEGQIGQG) are enriched in gly residues. Thr-186 carries the post-translational modification Phosphothreonine. The region spanning 295 to 347 (VDFEFSYDTAYPTAIAIMAEDKALETMRFELVPKIITEENFWRNYFYRVSLII) is the BSD domain. The disordered stretch occupies residues 360-391 (VGQASSGEDANEVATKEKKSKTAEPAKGDSSV). Residues 373–386 (ATKEKKSKTAEPAK) are compositionally biased toward basic and acidic residues. Residue Ser-433 is modified to Phosphoserine. Residues 487–551 (KDYEVVDEGG…DLIEDTDDLK (65 aa)) are disordered. A compositionally biased stretch (acidic residues) spans 514 to 523 (DDTEADEDEP). A compositionally biased stretch (polar residues) spans 524 to 535 (TISNLRTRSTNN). The residue at position 530 (Thr-530) is a Phosphothreonine. Positions 536 to 551 (DWEEYADLIEDTDDLK) are enriched in acidic residues.

Expressed specifically in neurons and transported to synaptic terminals.

In Drosophila melanogaster (Fruit fly), this protein is Synapse-associated protein of 47 kDa (Sap47).